Here is a 234-residue protein sequence, read N- to C-terminus: UPF0173 metal-dependent hydrolase Atu1317 (234 aa).

The protein belongs to the UPF0173 family.

In Agrobacterium fabrum (strain C58 / ATCC 33970) (Agrobacterium tumefaciens (strain C58)), this protein is UPF0173 metal-dependent hydrolase Atu1317.